A 1434-amino-acid polypeptide reads, in one-letter code: Probable ATP-dependent RNA helicase spindle-E (1434 aa).

Positions 125-292 (LAAINAHPVI…FATTNSIPPV (168 aa)) constitute a Helicase ATP-binding domain. 138–145 (GETGCGKT) serves as a coordination point for ATP. The DEAH box signature appears at 238–241 (DEVH). In terms of domain architecture, Helicase C-terminal spans 339 to 526 (KIIVIIDNME…NSVLKAKVLN (188 aa)). Residues 938 to 1001 (AGDITKGMMV…RLMPRELTEQ (64 aa)) form the Tudor domain.

This sequence belongs to the DEAD box helicase family. DEAH subfamily.

It is found in the cytoplasm. The enzyme catalyses ATP + H2O = ADP + phosphate + H(+). Functionally, probable ATP-binding RNA helicase which plays a central role during spermatogenesis and oogenesis by repressing transposable elements and preventing their mobilization, which is essential for the germline integrity. Acts via the piRNA metabolic process, which mediates the repression of transposable elements during meiosis by forming complexes composed of piRNAs and Piwi and govern the methylation and subsequent repression of transposons. Involved in the repression of LTR retrotransposon copia. Also involved in telomere regulation by repressing specialized telomeric retroelements HeT-A, TAHRE, and TART; Drosophila telomeres being maintained by transposition of specialized telomeric retroelements. Involved in telomeric trans-silencing, a repression mechanism by which a transposon or a transgene inserted in subtelomeric heterochromatin has the capacity to repress in trans in the female germline, a homologous transposon, or transgene located in euchromatin. Involved in the repression of testis-expressed Stellate genes by the homologous Su(Ste) repeats. Required for anteroposterior and dorsoventral axis formation during oogenesis. This is Probable ATP-dependent RNA helicase spindle-E (spn-E) from Drosophila sechellia (Fruit fly).